The following is a 377-amino-acid chain: Erythronate-4-phosphate dehydrogenase (377 aa).

Residues Ser45 and Thr66 each coordinate substrate. Asp146 and Thr175 together coordinate NAD(+). Arg208 is an active-site residue. Asp232 is a binding site for NAD(+). Residue Glu237 is part of the active site. His254 serves as the catalytic Proton donor. Residue Gly257 participates in NAD(+) binding. Residue Tyr258 participates in substrate binding.

Belongs to the D-isomer specific 2-hydroxyacid dehydrogenase family. PdxB subfamily. As to quaternary structure, homodimer.

It is found in the cytoplasm. It carries out the reaction 4-phospho-D-erythronate + NAD(+) = (R)-3-hydroxy-2-oxo-4-phosphooxybutanoate + NADH + H(+). It participates in cofactor biosynthesis; pyridoxine 5'-phosphate biosynthesis; pyridoxine 5'-phosphate from D-erythrose 4-phosphate: step 2/5. Catalyzes the oxidation of erythronate-4-phosphate to 3-hydroxy-2-oxo-4-phosphonooxybutanoate. The chain is Erythronate-4-phosphate dehydrogenase from Sodalis glossinidius (strain morsitans).